A 389-amino-acid polypeptide reads, in one-letter code: Ribosomal RNA large subunit methyltransferase M (389 aa).

Residues 1-13 show a composition bias toward polar residues; sequence MIGNARMSQKYPT. The disordered stretch occupies residues 1–24; that stretch reads MIGNARMSQKYPTSSSRKRSPLSS. S-adenosyl-L-methionine-binding positions include Ser214, 247–250, Asp266, Asp286, and Asp302; that span reads APGG. Lys331 (proton acceptor) is an active-site residue.

Belongs to the class I-like SAM-binding methyltransferase superfamily. RNA methyltransferase RlmE family. RlmM subfamily. As to quaternary structure, monomer.

It localises to the cytoplasm. The catalysed reaction is cytidine(2498) in 23S rRNA + S-adenosyl-L-methionine = 2'-O-methylcytidine(2498) in 23S rRNA + S-adenosyl-L-homocysteine + H(+). Catalyzes the 2'-O-methylation at nucleotide C2498 in 23S rRNA. In Hahella chejuensis (strain KCTC 2396), this protein is Ribosomal RNA large subunit methyltransferase M.